We begin with the raw amino-acid sequence, 156 residues long: ATP synthase subunit b 2 (156 aa).

The chain crosses the membrane as a helical span at residues 7 to 29; it reads LLGQAISFAIFVWFCMKYVWPPV.

It belongs to the ATPase B chain family. In terms of assembly, F-type ATPases have 2 components, F(1) - the catalytic core - and F(0) - the membrane proton channel. F(1) has five subunits: alpha(3), beta(3), gamma(1), delta(1), epsilon(1). F(0) has three main subunits: a(1), b(2) and c(10-14). The alpha and beta chains form an alternating ring which encloses part of the gamma chain. F(1) is attached to F(0) by a central stalk formed by the gamma and epsilon chains, while a peripheral stalk is formed by the delta and b chains.

It is found in the cell inner membrane. In terms of biological role, f(1)F(0) ATP synthase produces ATP from ADP in the presence of a proton or sodium gradient. F-type ATPases consist of two structural domains, F(1) containing the extramembraneous catalytic core and F(0) containing the membrane proton channel, linked together by a central stalk and a peripheral stalk. During catalysis, ATP synthesis in the catalytic domain of F(1) is coupled via a rotary mechanism of the central stalk subunits to proton translocation. Its function is as follows. Component of the F(0) channel, it forms part of the peripheral stalk, linking F(1) to F(0). The chain is ATP synthase subunit b 2 from Marinomonas sp. (strain MWYL1).